Reading from the N-terminus, the 608-residue chain is Granule-bound starch synthase 1, chloroplastic/amyloplastic (608 aa).

Residues 1–76 constitute a chloroplast transit peptide; it reads MATITASHFV…EGGMAAGTIV (76 aa). Lys96 contacts ADP-alpha-D-glucose.

This sequence belongs to the glycosyltransferase 1 family. Bacterial/plant glycogen synthase subfamily.

The protein resides in the plastid. It localises to the chloroplast. The protein localises to the amyloplast. It carries out the reaction an NDP-alpha-D-glucose + [(1-&gt;4)-alpha-D-glucosyl](n) = [(1-&gt;4)-alpha-D-glucosyl](n+1) + a ribonucleoside 5'-diphosphate + H(+). The protein operates within glycan biosynthesis; starch biosynthesis. In terms of biological role, required for the synthesis of amylose. In Ipomoea batatas (Sweet potato), this protein is Granule-bound starch synthase 1, chloroplastic/amyloplastic (WAXY).